A 264-amino-acid chain; its full sequence is 5'-nucleotidase SurE (264 aa).

4 residues coordinate a divalent metal cation: Asp9, Asp10, Ser40, and Asn95.

This sequence belongs to the SurE nucleotidase family. Requires a divalent metal cation as cofactor.

It localises to the cytoplasm. The enzyme catalyses a ribonucleoside 5'-phosphate + H2O = a ribonucleoside + phosphate. Nucleotidase that shows phosphatase activity on nucleoside 5'-monophosphates. The sequence is that of 5'-nucleotidase SurE from Helicobacter hepaticus (strain ATCC 51449 / 3B1).